A 201-amino-acid chain; its full sequence is ADP-ribosylation factor-related protein 1 (201 aa).

Residue M1 is modified to N-acetylmethionine. GTP-binding positions include 24–31, 75–79, and 134–137; these read GLDNAGKT, DLGGQ, and NKQD.

Belongs to the small GTPase superfamily. Arf family. As to quaternary structure, interacts with SYS1.

It localises to the golgi apparatus. It is found in the trans-Golgi network. Its function is as follows. Trans-Golgi-associated GTPase that regulates protein sorting. Controls the targeting of ARL1 and its effector to the trans-Golgi. Required for the lipidation of chylomicrons in the intestine and required for VLDL lipidation in the liver. The polypeptide is ADP-ribosylation factor-related protein 1 (Arfrp1) (Mus musculus (Mouse)).